We begin with the raw amino-acid sequence, 320 residues long: Na(+)-translocating NADH-quinone reductase subunit C (320 aa).

Residues 16 to 36 (WYIVSFILGLSLFAGVLLSTI) form a helical membrane-spanning segment. Thr-285 is modified (FMN phosphoryl threonine).

It belongs to the NqrC family. Composed of six subunits; NqrA, NqrB, NqrC, NqrD, NqrE and NqrF. Requires FMN as cofactor.

It localises to the cell inner membrane. The catalysed reaction is a ubiquinone + n Na(+)(in) + NADH + H(+) = a ubiquinol + n Na(+)(out) + NAD(+). Its function is as follows. NQR complex catalyzes the reduction of ubiquinone-1 to ubiquinol by two successive reactions, coupled with the transport of Na(+) ions from the cytoplasm to the periplasm. NqrA to NqrE are probably involved in the second step, the conversion of ubisemiquinone to ubiquinol. In Chlamydia pneumoniae (Chlamydophila pneumoniae), this protein is Na(+)-translocating NADH-quinone reductase subunit C.